The primary structure comprises 461 residues: METLFNGTLALAGRDQETTGFAWWAGNARLINLSGKLLGAHVAHAGLIVFWAGAMNLFEVAHFVPEKPMYEQGLILLPHLATLGWGVGPGGEVIDTFPYFVSGVLHLISSAVLGFGGIYHSLLGPETLEESFPFFGYVWKDRNKMTTILGIHLILLGIGAFLLVLKALYFGGVYDTWAPGGGDVRKITNLTLSPSVIFGYLLKSPFGGEGWIVSVDDLEDIIGGHVWLGSICIFGGIWHILTKPFAWARRALVWSGEAYLSYSLAALSIFGFTACCFVWFNNTAYPSEFYGPTGPEASQAQAFTFLVRDQRLGANVGSAQGPTGLGKYLMRSPTGEVIFGGETMRFWDLRAPWLEPLRGPNGLDLSRLKKDIQPWQERRSAEYMTHAPLGSLNSVGGVATEINAVNYVSPRSWLATSHFVLGFFLFVGHLWHAGRARAAAAGFEKGIDRDLEPVLFMTPLN.

The propeptide occupies 1–2 (ME). N-acetylthreonine is present on threonine 3. Threonine 3 is modified (phosphothreonine). Helical transmembrane passes span 57 to 81 (LFEV…PHLA), 122 to 143 (LLGP…KDRN), 166 to 188 (KALY…RKIT), 243 to 263 (KPFA…LSYS), and 279 to 300 (WFNN…ASQA). Glutamate 355 is a [CaMn4O5] cluster binding site. Residues 435 to 459 (RARAAAAGFEKGIDRDLEPVLFMTP) form a helical membrane-spanning segment.

It belongs to the PsbB/PsbC family. PsbC subfamily. In terms of assembly, PSII is composed of 1 copy each of membrane proteins PsbA, PsbB, PsbC, PsbD, PsbE, PsbF, PsbH, PsbI, PsbJ, PsbK, PsbL, PsbM, PsbT, PsbX, PsbY, PsbZ, Psb30/Ycf12, at least 3 peripheral proteins of the oxygen-evolving complex and a large number of cofactors. It forms dimeric complexes. Binds multiple chlorophylls and provides some of the ligands for the Ca-4Mn-5O cluster of the oxygen-evolving complex. It may also provide a ligand for a Cl- that is required for oxygen evolution. PSII binds additional chlorophylls, carotenoids and specific lipids. serves as cofactor.

The protein localises to the plastid. It localises to the chloroplast thylakoid membrane. Functionally, one of the components of the core complex of photosystem II (PSII). It binds chlorophyll and helps catalyze the primary light-induced photochemical processes of PSII. PSII is a light-driven water:plastoquinone oxidoreductase, using light energy to abstract electrons from H(2)O, generating O(2) and a proton gradient subsequently used for ATP formation. This chain is Photosystem II CP43 reaction center protein, found in Nandina domestica (Heavenly bamboo).